The following is a 229-amino-acid chain: Dephospho-CoA kinase (229 aa).

Residues 3–203 enclose the DPCK domain; it reads TVGLTGGIGS…ARRDAKATAK (201 aa). 11–16 is a binding site for ATP; sequence GSGKSA. The tract at residues 203-229 is disordered; the sequence is KATAKAETVASGTDTAASGTDTAAPAG.

The protein belongs to the CoaE family.

It localises to the cytoplasm. It carries out the reaction 3'-dephospho-CoA + ATP = ADP + CoA + H(+). The protein operates within cofactor biosynthesis; coenzyme A biosynthesis; CoA from (R)-pantothenate: step 5/5. Catalyzes the phosphorylation of the 3'-hydroxyl group of dephosphocoenzyme A to form coenzyme A. This Frankia casuarinae (strain DSM 45818 / CECT 9043 / HFP020203 / CcI3) protein is Dephospho-CoA kinase.